The following is a 240-amino-acid chain: Sugar fermentation stimulation protein homolog (240 aa).

The protein belongs to the SfsA family.

The sequence is that of Sugar fermentation stimulation protein homolog from Saccharolobus islandicus (strain M.14.25 / Kamchatka #1) (Sulfolobus islandicus).